A 203-amino-acid chain; its full sequence is Selenocysteine-containing peroxiredoxin PrxU (203 aa).

In terms of domain architecture, Thioredoxin spans 2-160 (VSVGKKAPDF…TLRQIQAFQL (159 aa)). U47 is an active-site residue. Residue U47 is a non-standard amino acid, selenocysteine.

Belongs to the peroxiredoxin family. AhpC/Prx1 subfamily.

It catalyses the reaction a hydroperoxide + [thioredoxin]-dithiol = an alcohol + [thioredoxin]-disulfide + H2O. In terms of biological role, thiol-specific peroxidase that catalyzes the reduction of hydrogen peroxide and organic hydroperoxides to water and alcohols, respectively. Plays a role in cell protection against oxidative stress by detoxifying peroxides. The sequence is that of Selenocysteine-containing peroxiredoxin PrxU from Peptoclostridium acidaminophilum (Eubacterium acidaminophilum).